A 100-amino-acid polypeptide reads, in one-letter code: ATP synthase subunit g 2, mitochondrial (100 aa).

It belongs to the ATPase g subunit family. F-type ATPases have 2 components, CF(1) - the catalytic core - and CF(0) - the membrane proton channel. CF(0) seems to have nine subunits: a, b, c, d, e, f, g, F6 and 8 (or A6L).

It is found in the mitochondrion membrane. In terms of biological role, mitochondrial membrane ATP synthase (F(1)F(0) ATP synthase or Complex V) produces ATP from ADP in the presence of a proton gradient across the membrane which is generated by electron transport complexes of the respiratory chain. F-type ATPases consist of two structural domains, F(1) - containing the extramembraneous catalytic core, and F(0) - containing the membrane proton channel, linked together by a central stalk and a peripheral stalk. During catalysis, ATP synthesis in the catalytic domain of F(1) is coupled via a rotary mechanism of the central stalk subunits to proton translocation. Part of the complex F(0) domain. Minor subunit located with subunit a in the membrane. This chain is ATP synthase subunit g 2, mitochondrial, found in Homo sapiens (Human).